A 538-amino-acid chain; its full sequence is Mitochondria-eating protein (538 aa).

The segment at 1–273 (MAENLKRLVS…PRSRSCSRSR (273 aa)) is interaction with YWHAG/14-3-3 protein gamma. Ser-85 carries the phosphoserine modification. Residues 92 to 137 (GKPVDSKVPSLQNTFDRERRKDPSPRDRDMQQLDSNLNSTRSQLNQ) are disordered. The span at 106–122 (FDRERRKDPSPRDRDMQ) shows a compositional bias: basic and acidic residues. Coiled-coil stretches lie at residues 118 to 186 (DRDM…ARHR) and 220 to 256 (QRDT…RSSR). A compositionally biased stretch (polar residues) spans 123-137 (QLDSNLNSTRSQLNQ). Ser-156 and Ser-159 each carry phosphoserine. Disordered regions lie at residues 174-227 (LKTL…EVTS) and 247-292 (KSAL…NRSK). Composition is skewed to basic and acidic residues over residues 181–209 (EDAR…RRCE) and 216–227 (RNADQRDTEVTS). The segment covering 253–278 (RSSRSRSPSPAPRSRSCSRSRSASPS) has biased composition (low complexity). A phosphoserine mark is found at Ser-285, Ser-287, and Ser-509.

This sequence belongs to the MIEAP family. Interacts (via coiled-coil domains) with BNIP3L (via BH3 domain). Interacts (via coiled-coil domains) with BNIP3 (via BH3 domain). Interacts with YWHAG/14-3-3 protein gamma; a protein that also plays a role in MALM.

The protein resides in the cytoplasm. It is found in the cytosol. The protein localises to the mitochondrion outer membrane. Its subcellular location is the mitochondrion matrix. Key regulator of mitochondrial quality that mediates the repairing or degradation of unhealthy mitochondria in response to mitochondrial damage. Mediator of mitochondrial protein catabolic process (also named MALM) by mediating the degradation of damaged proteins inside mitochondria by promoting the accumulation in the mitochondrial matrix of hydrolases that are characteristic of the lysosomal lumen. Also involved in mitochondrion degradation of damaged mitochondria by promoting the formation of vacuole-like structures (named MIV), which engulf and degrade unhealthy mitochondria by accumulating lysosomes. The physical interaction of SPATA18/MIEAP, BNIP3 and BNIP3L/NIX at the mitochondrial outer membrane regulates the opening of a pore in the mitochondrial double membrane in order to mediate the translocation of lysosomal proteins from the cytoplasm to the mitochondrial matrix. Binds cardiolipin. May form molecular condensates (non-membrane-bounded organelles) within mitochondria that compartmentalize and promote cardiolipin metabolism. The protein is Mitochondria-eating protein (SPATA18) of Macaca fascicularis (Crab-eating macaque).